The chain runs to 203 residues: Translation initiation factor IF-3 (203 aa).

A disordered region spans residues 168-203; that stretch reads QLSPKKKESATKKPATPKPATPAAVKAEKPAGDNEE. Positions 193–203 are enriched in basic and acidic residues; that stretch reads KAEKPAGDNEE.

Belongs to the IF-3 family. Monomer.

The protein localises to the cytoplasm. In terms of biological role, IF-3 binds to the 30S ribosomal subunit and shifts the equilibrium between 70S ribosomes and their 50S and 30S subunits in favor of the free subunits, thus enhancing the availability of 30S subunits on which protein synthesis initiation begins. The sequence is that of Translation initiation factor IF-3 from Bacteroides fragilis (strain ATCC 25285 / DSM 2151 / CCUG 4856 / JCM 11019 / LMG 10263 / NCTC 9343 / Onslow / VPI 2553 / EN-2).